The chain runs to 1835 residues: Protein TIC 214 (1835 aa).

Helical transmembrane passes span 25–45, 64–84, 87–107, 124–144, 172–192, and 221–241; these read VGLY…LFLL, FITG…HLAL, PHTI…WNNH, LSIQ…HFIL, VGWL…LFWI, and IFSI…PSPI. Residues 246–258 are compositionally biased toward basic and acidic residues; the sequence is LKETSETEERGES. Disordered stretches follow at residues 246-304, 735-759, and 1535-1578; these read LKET…DGNQ, EFKT…KKEE, and NRNQ…KRQS. The segment covering 259–268 has biased composition (acidic residues); it reads AEETDVEIET. The segment covering 1553-1569 has biased composition (basic and acidic residues); sequence PRNRQKDLEKDYAESDI.

Belongs to the TIC214 family. As to quaternary structure, part of the Tic complex.

It is found in the plastid. The protein resides in the chloroplast inner membrane. Its function is as follows. Involved in protein precursor import into chloroplasts. May be part of an intermediate translocation complex acting as a protein-conducting channel at the inner envelope. In Liriodendron tulipifera (Tuliptree), this protein is Protein TIC 214.